A 262-amino-acid chain; its full sequence is Acyl-[acyl-carrier-protein]--UDP-N-acetylglucosamine O-acyltransferase (262 aa).

The protein belongs to the transferase hexapeptide repeat family. LpxA subfamily. As to quaternary structure, homotrimer.

It is found in the cytoplasm. The catalysed reaction is a (3R)-hydroxyacyl-[ACP] + UDP-N-acetyl-alpha-D-glucosamine = a UDP-3-O-[(3R)-3-hydroxyacyl]-N-acetyl-alpha-D-glucosamine + holo-[ACP]. The protein operates within glycolipid biosynthesis; lipid IV(A) biosynthesis; lipid IV(A) from (3R)-3-hydroxytetradecanoyl-[acyl-carrier-protein] and UDP-N-acetyl-alpha-D-glucosamine: step 1/6. Involved in the biosynthesis of lipid A, a phosphorylated glycolipid that anchors the lipopolysaccharide to the outer membrane of the cell. This is Acyl-[acyl-carrier-protein]--UDP-N-acetylglucosamine O-acyltransferase from Haemophilus influenzae (strain PittEE).